Consider the following 33-residue polypeptide: Cytochrome b6-f complex subunit 7 (33 aa).

Residues 9 to 29 traverse the membrane as a helical segment; sequence AVICFTLTLIGLSLGFVLLKI.

This sequence belongs to the PetM family. In terms of assembly, the 4 large subunits of the cytochrome b6-f complex are cytochrome b6, subunit IV (17 kDa polypeptide, PetD), cytochrome f and the Rieske protein, while the 4 small subunits are PetG, PetL, PetM and PetN. The complex functions as a dimer.

The protein resides in the plastid. Its subcellular location is the cyanelle thylakoid membrane. Its function is as follows. Component of the cytochrome b6-f complex, which mediates electron transfer between photosystem II (PSII) and photosystem I (PSI), cyclic electron flow around PSI, and state transitions. The chain is Cytochrome b6-f complex subunit 7 from Cyanophora paradoxa.